Reading from the N-terminus, the 368-residue chain is tRNA-specific 2-thiouridylase MnmA (368 aa).

ATP-binding positions include 11–18 (GMSGGVDS) and M37. Residues 97–99 (NPD) form an interaction with target base in tRNA region. The active-site Nucleophile is the C102. Residues C102 and C199 are joined by a disulfide bond. Residue G127 participates in ATP binding. An interaction with tRNA region spans residues 149 to 151 (KDQ). The active-site Cysteine persulfide intermediate is C199. The interval 311–312 (RY) is interaction with tRNA.

The protein belongs to the MnmA/TRMU family. As to quaternary structure, interacts with TusE.

It is found in the cytoplasm. The enzyme catalyses S-sulfanyl-L-cysteinyl-[protein] + uridine(34) in tRNA + AH2 + ATP = 2-thiouridine(34) in tRNA + L-cysteinyl-[protein] + A + AMP + diphosphate + H(+). Functionally, catalyzes the 2-thiolation of uridine at the wobble position (U34) of tRNA(Lys), tRNA(Glu) and tRNA(Gln), leading to the formation of s(2)U34, the first step of tRNA-mnm(5)s(2)U34 synthesis. Sulfur is provided by IscS, via a sulfur-relay system. Binds ATP and its substrate tRNAs. This is tRNA-specific 2-thiouridylase MnmA from Shigella dysenteriae serotype 1 (strain Sd197).